The following is a 157-amino-acid chain: Crossover junction endodeoxyribonuclease RuvC (157 aa).

Active-site residues include aspartate 7, glutamate 67, and aspartate 140. Positions 7, 67, and 140 each coordinate Mg(2+).

This sequence belongs to the RuvC family. Homodimer which binds Holliday junction (HJ) DNA. The HJ becomes 2-fold symmetrical on binding to RuvC with unstacked arms; it has a different conformation from HJ DNA in complex with RuvA. In the full resolvosome a probable DNA-RuvA(4)-RuvB(12)-RuvC(2) complex forms which resolves the HJ. Mg(2+) serves as cofactor.

It localises to the cytoplasm. The enzyme catalyses Endonucleolytic cleavage at a junction such as a reciprocal single-stranded crossover between two homologous DNA duplexes (Holliday junction).. Its function is as follows. The RuvA-RuvB-RuvC complex processes Holliday junction (HJ) DNA during genetic recombination and DNA repair. Endonuclease that resolves HJ intermediates. Cleaves cruciform DNA by making single-stranded nicks across the HJ at symmetrical positions within the homologous arms, yielding a 5'-phosphate and a 3'-hydroxyl group; requires a central core of homology in the junction. The consensus cleavage sequence is 5'-(A/T)TT(C/G)-3'. Cleavage occurs on the 3'-side of the TT dinucleotide at the point of strand exchange. HJ branch migration catalyzed by RuvA-RuvB allows RuvC to scan DNA until it finds its consensus sequence, where it cleaves and resolves the cruciform DNA. This Rickettsia bellii (strain RML369-C) protein is Crossover junction endodeoxyribonuclease RuvC.